The primary structure comprises 368 residues: Flagellar P-ring protein (368 aa).

The first 24 residues, 1–24 (MDKPMKRIFVVLVILLVLPQLALA), serve as a signal peptide directing secretion.

Belongs to the FlgI family. In terms of assembly, the basal body constitutes a major portion of the flagellar organelle and consists of four rings (L,P,S, and M) mounted on a central rod.

The protein resides in the periplasm. Its subcellular location is the bacterial flagellum basal body. In terms of biological role, assembles around the rod to form the L-ring and probably protects the motor/basal body from shearing forces during rotation. The polypeptide is Flagellar P-ring protein (Geobacter sulfurreducens (strain ATCC 51573 / DSM 12127 / PCA)).